The following is a 52-amino-acid chain: uncharacterized protein (52 aa).

A helical transmembrane segment spans residues 7 to 27 (MFQLFVFIIFAAVVFAAVTGF).

It is found in the membrane. This is an uncharacterized protein from Bacillus subtilis (strain 168).